Reading from the N-terminus, the 261-residue chain is uncharacterized protein (261 aa).

ATP is bound at residue 41 to 48 (GKSGSGKS).

This sequence belongs to the IIV-6 075L family.

This is an uncharacterized protein from Invertebrate iridescent virus 3 (IIV-3).